We begin with the raw amino-acid sequence, 216 residues long: Protein-L-isoaspartate O-methyltransferase (216 aa).

Serine 61 is an active-site residue.

This sequence belongs to the methyltransferase superfamily. L-isoaspartyl/D-aspartyl protein methyltransferase family.

It is found in the cytoplasm. The enzyme catalyses [protein]-L-isoaspartate + S-adenosyl-L-methionine = [protein]-L-isoaspartate alpha-methyl ester + S-adenosyl-L-homocysteine. Catalyzes the methyl esterification of L-isoaspartyl residues in peptides and proteins that result from spontaneous decomposition of normal L-aspartyl and L-asparaginyl residues. It plays a role in the repair and/or degradation of damaged proteins. The chain is Protein-L-isoaspartate O-methyltransferase from Geobacter metallireducens (strain ATCC 53774 / DSM 7210 / GS-15).